A 404-amino-acid chain; its full sequence is Cysteine desulfurase IscS (404 aa).

Pyridoxal 5'-phosphate-binding positions include 75-76 (AT), asparagine 155, glutamine 183, and 203-205 (SAH). The residue at position 206 (lysine 206) is an N6-(pyridoxal phosphate)lysine. A pyridoxal 5'-phosphate-binding site is contributed by threonine 243. Cysteine 328 serves as the catalytic Cysteine persulfide intermediate. Position 328 (cysteine 328) interacts with [2Fe-2S] cluster.

This sequence belongs to the class-V pyridoxal-phosphate-dependent aminotransferase family. NifS/IscS subfamily. In terms of assembly, homodimer. Forms a heterotetramer with IscU, interacts with other sulfur acceptors. Pyridoxal 5'-phosphate serves as cofactor.

The protein resides in the cytoplasm. The enzyme catalyses (sulfur carrier)-H + L-cysteine = (sulfur carrier)-SH + L-alanine. Its pathway is cofactor biosynthesis; iron-sulfur cluster biosynthesis. Its function is as follows. Master enzyme that delivers sulfur to a number of partners involved in Fe-S cluster assembly, tRNA modification or cofactor biosynthesis. Catalyzes the removal of elemental sulfur atoms from cysteine to produce alanine. Functions as a sulfur delivery protein for Fe-S cluster synthesis onto IscU, an Fe-S scaffold assembly protein, as well as other S acceptor proteins. The protein is Cysteine desulfurase IscS of Colwellia psychrerythraea (strain 34H / ATCC BAA-681) (Vibrio psychroerythus).